We begin with the raw amino-acid sequence, 309 residues long: Ecotin-like protein 3 (309 aa).

Residues 140–309 form a disordered region; sequence QQELEAPAVS…KSGRDSRRNS (170 aa). The span at 156–167 shows a compositional bias: basic and acidic residues; it reads VRERQNNPEGHA. Over residues 168–180 the composition is skewed to low complexity; that stretch reads HPVVVHSVESPEV. Residues 181–190 are compositionally biased toward basic and acidic residues; it reads SGHKDGDQPM. Over residues 196 to 205 the composition is skewed to low complexity; the sequence is LKQSCSNSSR. Residues 209–221 show a composition bias toward polar residues; sequence HSASGSSPKNTPL. Over residues 261-279 the composition is skewed to basic and acidic residues; the sequence is SDSTSSRKDDQDSGYEKKV. Low complexity predominate over residues 290–299; that stretch reads SSPKRSASPK.

This sequence belongs to the protease inhibitor I11 (ecotin) family.

The sequence is that of Ecotin-like protein 3 from Leishmania braziliensis.